Reading from the N-terminus, the 452-residue chain is tRNA modification GTPase MnmE (452 aa).

Positions 21, 78, and 118 each coordinate (6S)-5-formyl-5,6,7,8-tetrahydrofolate. In terms of domain architecture, TrmE-type G spans 214-375 (GMKVVIAGRP…LREHLKKSMG (162 aa)). Asn224 is a K(+) binding site. GTP contacts are provided by residues 224 to 229 (NAGKSS), 243 to 249 (TNIAGTT), and 268 to 271 (DTAG). Ser228 lines the Mg(2+) pocket. Positions 243, 245, and 248 each coordinate K(+). Thr249 serves as a coordination point for Mg(2+). Lys452 contributes to the (6S)-5-formyl-5,6,7,8-tetrahydrofolate binding site.

This sequence belongs to the TRAFAC class TrmE-Era-EngA-EngB-Septin-like GTPase superfamily. TrmE GTPase family. Homodimer. Heterotetramer of two MnmE and two MnmG subunits. K(+) is required as a cofactor.

The protein localises to the cytoplasm. Functionally, exhibits a very high intrinsic GTPase hydrolysis rate. Involved in the addition of a carboxymethylaminomethyl (cmnm) group at the wobble position (U34) of certain tRNAs, forming tRNA-cmnm(5)s(2)U34. The polypeptide is tRNA modification GTPase MnmE (Actinobacillus pleuropneumoniae serotype 5b (strain L20)).